Consider the following 430-residue polypeptide: Enolase (430 aa).

The sufficient for secretion stretch occupies residues 1-140 (MPYIVDVYAR…YQYLGGFNSK (140 aa)). Phosphothreonine is present on Thr141. Gln163 contacts (2R)-2-phosphoglycerate. Glu205 acts as the Proton donor in catalysis. Asp242 provides a ligand contact to Mg(2+). At Ser259 the chain carries Phosphoserine. Tyr281 bears the Phosphotyrosine mark. Mg(2+)-binding residues include Glu287 and Asp314. Phosphoserine is present on Ser325. Residues Lys339, Arg368, Ser369, and Lys390 each coordinate (2R)-2-phosphoglycerate. Lys339 functions as the Proton acceptor in the catalytic mechanism.

The protein belongs to the enolase family. In terms of assembly, homooctamer. Component of the RNA degradosome complex composed of rny, rnjA, rnjB, pnp, pfkA and eno (although rnjA and rnjB's presence is controversial). Mg(2+) serves as cofactor. In terms of processing, phosphorylated during sporulation.

The protein localises to the cytoplasm. It localises to the secreted. Its subcellular location is the cell surface. It catalyses the reaction (2R)-2-phosphoglycerate = phosphoenolpyruvate + H2O. It participates in carbohydrate degradation; glycolysis; pyruvate from D-glyceraldehyde 3-phosphate: step 4/5. With respect to regulation, covalent binding to the substrate (probably 2-PG) at Lys-339 of a small fraction of enolase causes inactivation of the enzyme, and possibly serves as a signal for the export of the protein. Citrate acts as a non-competitive inhibitor for both forward and reverse reactions, probably by chelating Mg(2+). In terms of biological role, catalyzes the reversible conversion of 2-phosphoglycerate (2-PG) into phosphoenolpyruvate (PEP). It is essential for the degradation of carbohydrates via glycolysis. A component of the RNA degradosome, a multi-enzyme complex involved in RNA processing and messenger RNA degradation. The chain is Enolase from Bacillus subtilis (strain 168).